Here is a 274-residue protein sequence, read N- to C-terminus: 2,3,4,5-tetrahydropyridine-2,6-dicarboxylate N-succinyltransferase (274 aa).

Residues Arg-106 and Asp-143 each contribute to the substrate site.

It belongs to the transferase hexapeptide repeat family. As to quaternary structure, homotrimer.

It localises to the cytoplasm. The enzyme catalyses (S)-2,3,4,5-tetrahydrodipicolinate + succinyl-CoA + H2O = (S)-2-succinylamino-6-oxoheptanedioate + CoA. The protein operates within amino-acid biosynthesis; L-lysine biosynthesis via DAP pathway; LL-2,6-diaminopimelate from (S)-tetrahydrodipicolinate (succinylase route): step 1/3. The sequence is that of 2,3,4,5-tetrahydropyridine-2,6-dicarboxylate N-succinyltransferase from Rickettsia prowazekii (strain Madrid E).